Here is a 345-residue protein sequence, read N- to C-terminus: Dihydroorotase (345 aa).

The Zn(2+) site is built by His-14 and His-16. Substrate is bound by residues 16–18 (HLR) and Asn-42. 3 residues coordinate Zn(2+): Lys-102, His-139, and His-177. An N6-carboxylysine modification is found at Lys-102. His-139 lines the substrate pocket. Leu-222 contributes to the substrate binding site. Zn(2+) is bound at residue Asp-250. The active site involves Asp-250. Substrate-binding residues include His-254 and Ala-266.

This sequence belongs to the metallo-dependent hydrolases superfamily. DHOase family. Class II DHOase subfamily. In terms of assembly, homodimer. Zn(2+) is required as a cofactor.

It catalyses the reaction (S)-dihydroorotate + H2O = N-carbamoyl-L-aspartate + H(+). It functions in the pathway pyrimidine metabolism; UMP biosynthesis via de novo pathway; (S)-dihydroorotate from bicarbonate: step 3/3. In terms of biological role, catalyzes the reversible cyclization of carbamoyl aspartate to dihydroorotate. This is Dihydroorotase from Nitrosomonas eutropha (strain DSM 101675 / C91 / Nm57).